The following is a 242-amino-acid chain: uncharacterized protein (242 aa).

Disordered regions lie at residues Ser-43–Asp-70 and Arg-112–Arg-162. Over residues Gln-58–Asp-70 the composition is skewed to polar residues. Low complexity-rich tracts occupy residues Glu-122–Ala-139 and Ala-147–Arg-162.

This is an uncharacterized protein from Homo sapiens (Human).